Here is a 536-residue protein sequence, read N- to C-terminus: MEELGSRNPSIGLESIGFSDLSVVRYNFEAAQLYEEALAHGEAELTAHGALCARTGQHTGRSPKDKYVVRDANTADQIWWDNNSAISPENFDRLRQDMLAHAKGMSLYVQDLVGGADPENALPTRVVTEFAWHSLFIRNLLIRPEREALSSFQPMLTIIDLPSFKASPERHGCRSETVIACDLTNGLVLIGGTSYAGEMKKSVFTVLNYLLPRKSVMPMHCSANVGPAGDTAIFFGLSGTGKTTLSADPNRTLIGDDEHGWGEKGVFNFEGGCYAKAIRLSEAAEPEIFATTQRFGTVMENVVLDERRMPDFEDGSLTENTRCAYPLHFIPNASKTGTAPQPRTIIMLTADAFGVLPPIAKLTPEQAMYHFLSGYTAKVAGTEKGVTEPEATFSTCFGAPFMPRHPSEYGNLLKELIARNGVTCWLVNTGWTGGAYGTGSRMPIKVTRALLSAALDGSLNSASFRSDANFGFAVPVSVPGVESRILDPRSTWADGAAYDAQARRLVDMFIANFAKFESHVDGSVRDAAPGARIAAE.

The substrate site is built by Arg61, Tyr195, and Lys201. ATP contacts are provided by residues Lys201, His220, and 236 to 244 (GLSGTGKTT). The Mn(2+) site is built by Lys201 and His220. A Mn(2+)-binding site is contributed by Asp257. ATP is bound by residues Glu285, Arg322, and Thr447. Arg322 contributes to the substrate binding site.

It belongs to the phosphoenolpyruvate carboxykinase (ATP) family. Requires Mn(2+) as cofactor.

The protein resides in the cytoplasm. The catalysed reaction is oxaloacetate + ATP = phosphoenolpyruvate + ADP + CO2. It functions in the pathway carbohydrate biosynthesis; gluconeogenesis. In terms of biological role, involved in the gluconeogenesis. Catalyzes the conversion of oxaloacetate (OAA) to phosphoenolpyruvate (PEP) through direct phosphoryl transfer between the nucleoside triphosphate and OAA. This chain is Phosphoenolpyruvate carboxykinase (ATP), found in Sinorhizobium medicae (strain WSM419) (Ensifer medicae).